The following is a 528-amino-acid chain: MSTVNVQIGLHELLNGSNAQIQLSVPQLVEKVLMRNEGKLTSTGAVSASTGKYTGRSPKDKFIVKEASVADKIAWGAVNQPISEEHFNKLYTKVLEYLKEKEELFVFKGFAGADRNYRLPIQVINEYAWHNLFVHQLFIRPTEEELTTHESEFTIVSAPNFKADPAVDGTNSEAFIMVSFEKRIVLIGGTEYAGEMKKSIFSIMNFLLPEQDILSMHCSANVGEEGDVALFFGLSGTGKTTLSADPNRKLIGDDEHGWSDNGVFNIEGGCYAKCVNLSHEKEPQIFDAITFGSVLENVIINDQTRIADYNDTTLTENTRAAYPMHAIDNIVLPSVAGHPNTIIFLTADASGVLPPISKLSKEQAMYHFLSGYTSKLAGTERGVTSPQATFSTCFGSPFLPLDASRYAEMLGEKIEKHDAKVFLVNTGWTGGEYGVGKRMNLGYTRAMIQAALSGELAKTETAKHDIFGLEVPLHVPGVPDEVLMPEQTWADKAAYKAKAIELANEFKANFKKFDSVSEDIINLGGPIA.

Substrate-binding residues include Arg56, Tyr192, and Lys198. Residues Lys198, His217, and 233–241 (GLSGTGKTT) contribute to the ATP site. Lys198 and His217 together coordinate Mn(2+). A Mn(2+)-binding site is contributed by Asp254. Residues Glu282, Arg319, and Thr444 each coordinate ATP. Arg319 is a binding site for substrate.

It belongs to the phosphoenolpyruvate carboxykinase (ATP) family. The cofactor is Mn(2+).

It is found in the cytoplasm. The catalysed reaction is oxaloacetate + ATP = phosphoenolpyruvate + ADP + CO2. Its pathway is carbohydrate biosynthesis; gluconeogenesis. Functionally, involved in the gluconeogenesis. Catalyzes the conversion of oxaloacetate (OAA) to phosphoenolpyruvate (PEP) through direct phosphoryl transfer between the nucleoside triphosphate and OAA. This is Phosphoenolpyruvate carboxykinase (ATP) from Bacillus cereus (strain AH187).